A 393-amino-acid chain; its full sequence is Bifunctional enzyme Fae/Hps (393 aa).

Positions 1 to 161 are formaldehyde-activating enzyme; sequence MYLIGEALIG…HEKDRAAHAV (161 aa). H17 functions as the Proton donor in the catalytic mechanism. Residues D19, L48, K66, T68, and Q83 each coordinate substrate. A 3-hexulose-6-phosphate synthase region spans residues 162–393; sequence MGFKVPRLWD…IDQFRIMTDF (232 aa).

This sequence in the N-terminal section; belongs to the formaldehyde-activating enzyme family. The protein in the C-terminal section; belongs to the HPS/KGPDC family. HPS subfamily.

The enzyme catalyses 5,6,7,8-tetrahydromethanopterin + formaldehyde = 5,10-methylenetetrahydromethanopterin + H2O. The catalysed reaction is D-ribulose 5-phosphate + formaldehyde = D-arabino-hex-3-ulose 6-phosphate. It participates in carbohydrate biosynthesis; D-ribose 5-phosphate biosynthesis. Catalyzes the condensation of formaldehyde with tetrahydromethanopterin (H(4)MPT) to 5,10-methylenetetrahydromethanopterin. In terms of biological role, catalyzes the reversible formation of ribulose-5-phosphate and formaldehyde from 3-hexulose-6-phosphate. The protein is Bifunctional enzyme Fae/Hps of Methanospirillum hungatei JF-1 (strain ATCC 27890 / DSM 864 / NBRC 100397 / JF-1).